A 489-amino-acid chain; its full sequence is Protein LMBR1L (489 aa).

The Extracellular portion of the chain corresponds to 1–21 (MEAPDCEVLSVREQLFHERIR). The interaction with LGB stretch occupies residues 1-59 (MEAPDCEVLSVREQLFHERIRECIISTLLFATLYILCHIFLTRFKKPAEFTTVDDADAT). The tract at residues 1–76 (MEAPDCEVLS…LCTFTLAIAL (76 aa)) is LCN1-binding. A helical membrane pass occupies residues 22 to 42 (ECIISTLLFATLYILCHIFLT). Residues 43–66 (RFKKPAEFTTVDDADATVNKIALE) lie on the Cytoplasmic side of the membrane. The chain crosses the membrane as a helical span at residues 67–87 (LCTFTLAIALGAVLLLPFSII). The Extracellular portion of the chain corresponds to 88–114 (SNEVLLSLPRNYYIQWLNGSLIHGLWN). Residues 115 to 135 (LVFLFSNLSLIFLMPFAYFFT) form a helical membrane-spanning segment. The Cytoplasmic portion of the chain corresponds to 136-154 (ESEGFAGSRKGVLGRVYET). Residues 155 to 175 (VVMLMLLTLLVLGMVWVASAI) form a helical membrane-spanning segment. The Extracellular portion of the chain corresponds to 176 to 196 (VDNNKASRESLYDFWEYYLPY). Residues 197–217 (LYSCISFLGVLLLLVCTPLGL) form a helical membrane-spanning segment. The Cytoplasmic portion of the chain corresponds to 218-305 (ARMFSVTGKL…NLGYPLAMLC (88 aa)). Residues 306–326 (LLVLTGLSVLIVAIHILELLI) form a helical membrane-spanning segment. Residues 327 to 350 (DEAAMPRGMQGASLGQVSFSKLGS) lie on the Extracellular side of the membrane. Residues 351–371 (FGAVVQVVLIFYLMVSSVVGF) traverse the membrane as a helical segment. Residues 372-388 (YSSPLFRSLRPRWHDTA) lie on the Cytoplasmic side of the membrane. The chain crosses the membrane as a helical span at residues 389–409 (MTQIIGNCVCLLVLSSALPVF). At 410-431 (SRTLGLTRFDLLGDFGRFNWLG) the chain is on the extracellular side. Residues 432 to 452 (NFYIVFLYNAAFAGLTTLCLV) traverse the membrane as a helical segment. Over 453–489 (KTFTAAVRAELIRAFGLDRLPLPVSGFPRASRKTQHQ) the chain is Cytoplasmic.

It belongs to the LIMR family. In terms of assembly, dimer. Can also form higher oligomers. Interacts with LCN1; this interaction mediates the endocytosis of LCN1. Interacts with UBAC2, FAF2, VCP, AMFR, ZNRF3, CTNNB1, LRP6, GSK3A, GSK3B, FZD6, DVL2 and RNF43. Interaction with LGB and SCGB1A1 is controversial.

The protein resides in the cell membrane. It is found in the endoplasmic reticulum membrane. Functionally, plays an essential role in lymphocyte development by negatively regulating the canonical Wnt signaling pathway. In association with UBAC2 and E3 ubiquitin-protein ligase AMFR, promotes the ubiquitin-mediated degradation of CTNNB1 and Wnt receptors FZD6 and LRP6. LMBR1L stabilizes the beta-catenin destruction complex that is required for regulating CTNNB1 levels. Acts as a LCN1 receptor and can mediate its endocytosis. The chain is Protein LMBR1L (LMBR1L) from Macaca fascicularis (Crab-eating macaque).